We begin with the raw amino-acid sequence, 558 residues long: Factor VII-activating protease (558 aa).

Positions 1–23 (MFARMSDLHVLLLMVLAGKTAFG) are cleaved as a signal peptide. Asparagine 54 carries N-linked (GlcNAc...) asparagine glycosylation. 3 consecutive EGF-like domains span residues 71–107 (EDDP…NRCQ), 109–146 (VQNK…SDCS), and 148–186 (VVPV…KLCE). Intrachain disulfides connect cysteine 75-cysteine 86, cysteine 80-cysteine 95, cysteine 97-cysteine 106, cysteine 113-cysteine 123, cysteine 118-cysteine 134, cysteine 136-cysteine 145, cysteine 152-cysteine 163, cysteine 157-cysteine 174, cysteine 176-cysteine 185, cysteine 192-cysteine 274, cysteine 213-cysteine 255, cysteine 244-cysteine 269, cysteine 299-cysteine 433, cysteine 345-cysteine 361, cysteine 353-cysteine 422, cysteine 445-cysteine 513, cysteine 475-cysteine 491, and cysteine 503-cysteine 531. Residues 191 to 274 (DCYVDDGYSY…KWEYCDVPAC (84 aa)) enclose the Kringle domain. A Peptidase S1 domain is found at 312–553 (IFGGFKSTAG…FLTWIKATME (242 aa)). Catalysis depends on charge relay system residues histidine 360 and aspartate 409. Catalysis depends on serine 507, which acts as the Charge relay system.

It belongs to the peptidase S1 family. In terms of assembly, heterodimer; disulfide-linked. Heterodimer of a 50 kDa heavy and a 27 kDa light chain linked by a disulfide bond. In terms of processing, proteolytic cleavage at Gly-23 or Leu-27 can give rise to the 50 kDa heavy chain (HC) and cleavage at Arg-311 or Lys-317 can give rise to the 27 kDa light chain (LC). The HC can undergo further proteolytic cleavage giving rise to a 26 kDa fragment. The LC can undergo further proteolytic cleavage at Arg-311 leading to a 17-kDa fragment and at Arg-478 leading to a 8-kDa fragment.

It localises to the secreted. In terms of biological role, cleaves the alpha-chain at multiple sites and the beta-chain between 'Lys-53' and 'Lys-54' but not the gamma-chain of fibrinogen and therefore does not initiate the formation of the fibrin clot and does not cause the fibrinolysis directly. It does not cleave (activate) prothrombin and plasminogen but converts the inactive single chain urinary plasminogen activator (pro-urokinase) to the active two chain form. Activates coagulation factor VII. May function as a tumor suppressor negatively regulating cell proliferation and cell migration. The polypeptide is Factor VII-activating protease (HABP2) (Bos taurus (Bovine)).